A 156-amino-acid chain; its full sequence is MNINATLLGQAIAFFIFVVFCMKYVWPPLMAAIEARQKAIADGLSSAERAKKDLDLAKANATDQLKEAKLQAAEIIEQANKRKAQIIDEAAAGAHSEREKILAQGRAEIEAERHRAKEELRKQVAALAIAGAEKILARQIDQAANSDIVDKLVAEL.

A helical membrane pass occupies residues 11 to 31; that stretch reads AIAFFIFVVFCMKYVWPPLMA.

The protein belongs to the ATPase B chain family. In terms of assembly, F-type ATPases have 2 components, F(1) - the catalytic core - and F(0) - the membrane proton channel. F(1) has five subunits: alpha(3), beta(3), gamma(1), delta(1), epsilon(1). F(0) has three main subunits: a(1), b(2) and c(10-14). The alpha and beta chains form an alternating ring which encloses part of the gamma chain. F(1) is attached to F(0) by a central stalk formed by the gamma and epsilon chains, while a peripheral stalk is formed by the delta and b chains.

It localises to the cell inner membrane. Its function is as follows. F(1)F(0) ATP synthase produces ATP from ADP in the presence of a proton or sodium gradient. F-type ATPases consist of two structural domains, F(1) containing the extramembraneous catalytic core and F(0) containing the membrane proton channel, linked together by a central stalk and a peripheral stalk. During catalysis, ATP synthesis in the catalytic domain of F(1) is coupled via a rotary mechanism of the central stalk subunits to proton translocation. In terms of biological role, component of the F(0) channel, it forms part of the peripheral stalk, linking F(1) to F(0). In Aeromonas hydrophila subsp. hydrophila (strain ATCC 7966 / DSM 30187 / BCRC 13018 / CCUG 14551 / JCM 1027 / KCTC 2358 / NCIMB 9240 / NCTC 8049), this protein is ATP synthase subunit b.